Reading from the N-terminus, the 150-residue chain is Major facilitator superfamily domain-containing 14C pseudogene (150 aa).

The interval 1–25 (MSVEPPPELEEKAASEPEAGAMPEK) is disordered. Residues 1 to 49 (MSVEPPPELEEKAASEPEAGAMPEKRAGAQAAGSTWLQGFGPPSVYHAA) are Extracellular-facing. The helical transmembrane segment at 50–70 (IVIFLEFFAWGLLTTPMLTVL) threads the bilayer. The Cytoplasmic segment spans residues 71 to 82 (HETFSQHTFLMN). Residues 83 to 103 (GLIQGVKGLLSFLSAPLIGAL) traverse the membrane as a helical segment. At 104–111 (SDVWGRKP) the chain is on the extracellular side. A helical transmembrane segment spans residues 112–132 (FLLGTVFFTCFPIPLMRISPC). At 133–150 (RVWWRAPVVPATCGRRMA) the chain is on the cytoplasmic side.

The protein belongs to the major facilitator superfamily.

Its subcellular location is the membrane. This chain is Major facilitator superfamily domain-containing 14C pseudogene, found in Homo sapiens (Human).